The chain runs to 66 residues: Large ribosomal subunit protein bL35 (66 aa).

The protein belongs to the bacterial ribosomal protein bL35 family.

This chain is Large ribosomal subunit protein bL35, found in Thermomicrobium roseum (strain ATCC 27502 / DSM 5159 / P-2).